A 271-amino-acid chain; its full sequence is MSENKQEVHPDTITDVEAVIDTEEELIKECEEMWKDMEDCQNKLSLIGTETLTNADAQLSLLIMQMKCLTAELGQWKKRKPEIIPLNEDVLLTLGKEEFQKLRCDLEMVLSTIQSKNEKLKEDLEREQQWLDEQQQILDTLNVLNSDVENQVVTLTESRIFNELTTKIRGIKEFKEKLLLTLGAFLDNHFPLPEASTPKKRKNIQDSNAQLITLNEILEMLINRMFDVPHDPYVKIRDSFWPPYIELLLRYGIALRHPEDPSQIRLEAFHQ.

Coiled coils occupy residues 11-44 and 102-151; these read DTIT…QNKL and LRCD…VENQ.

This sequence belongs to the CENP-K/MCM22 family. Component of the CENPA-CAD complex, composed of CENPI, CENPK, CENPL, CENPO, CENPP, CENPQ, CENPR and CENPS. The CENPA-CAD complex interacts with the CENPA-NAC complex, at least composed of CENPA, CENPC, CENPH, CENPM, CENPN, CENPT and CENPU. May interact with Sox6. As to expression, highly expressed in testis.

The protein resides in the nucleus. It is found in the chromosome. The protein localises to the centromere. It localises to the kinetochore. Component of the CENPA-CAD (nucleosome distal) complex, a complex recruited to centromeres which is involved in assembly of kinetochore proteins, mitotic progression and chromosome segregation. May be involved in incorporation of newly synthesized CENPA into centromeres via its interaction with the CENPA-NAC complex. Acts in coordination with KNL1 to recruit the NDC80 complex to the outer kinetochore. In Mus musculus (Mouse), this protein is Centromere protein K (Cenpk).